Reading from the N-terminus, the 175-residue chain is uncharacterized protein (175 aa).

Residues 107–138 (KTEEEAEKTLQEIERKIFKKLWENLDKERKRE) are a coiled coil.

This is an uncharacterized protein from Aquifex aeolicus (strain VF5).